We begin with the raw amino-acid sequence, 270 residues long: Shikimate dehydrogenase (NADP(+)) (270 aa).

Shikimate contacts are provided by residues 14 to 16 and threonine 61; that span reads SKS. The active-site Proton acceptor is lysine 65. Shikimate-binding residues include asparagine 86 and aspartate 101. NADP(+) is bound by residues 126–130, 150–155, and methionine 213; these read GAGGA and NRTVSK. Tyrosine 215 contacts shikimate. Glycine 237 is a binding site for NADP(+).

It belongs to the shikimate dehydrogenase family. In terms of assembly, homodimer.

It catalyses the reaction shikimate + NADP(+) = 3-dehydroshikimate + NADPH + H(+). It functions in the pathway metabolic intermediate biosynthesis; chorismate biosynthesis; chorismate from D-erythrose 4-phosphate and phosphoenolpyruvate: step 4/7. Functionally, involved in the biosynthesis of the chorismate, which leads to the biosynthesis of aromatic amino acids. Catalyzes the reversible NADPH linked reduction of 3-dehydroshikimate (DHSA) to yield shikimate (SA). The protein is Shikimate dehydrogenase (NADP(+)) of Hahella chejuensis (strain KCTC 2396).